The following is a 534-amino-acid chain: Putative fimbrium tip subunit Fim1C (534 aa).

The first 21 residues, 1 to 21 (MKQYKLMQVALLAILLFGWAG), serve as a signal peptide directing secretion. A lipid anchor (N-palmitoyl cysteine) is attached at cysteine 22. A lipid anchor (S-diacylglycerol cysteine) is attached at cysteine 22. The propeptide occupies 22–54 (CSQNEEEVPGNVRNGIVLNVTDTGIISNEPSTR).

It belongs to the bacteroidetes fimbrillin superfamily. Mfa-like family. May be part of the fimbrial tip.

Its subcellular location is the fimbrium. It is found in the cell outer membrane. Probably a component of the fimbrium tip. Fimbriae are filamentous appendages on the cell surface that mediate cell adhesion and biofilm formation. This is Putative fimbrium tip subunit Fim1C from Bacteroides ovatus (strain ATCC 8483 / DSM 1896 / JCM 5824 / BCRC 10623 / CCUG 4943 / NCTC 11153).